The primary structure comprises 689 residues: MTTNTFTDPPVEMAKERGKTQFTVRDVTNFLNGGEEETQIVEKIMSSIERDPVLSVTADYDCNLQQARKQTMERVAALSPYLVTDTEKLSLWRAQLHGMVDMSTRTRLSIHNNLFIGSIRGSGTPEQFKYWVKKGAVAVKQFYGCFAMTELGHGSNLKGLETTATYDQDSDQFIINTPHIGATKWWIGGAAHTSTHCVCFAKLIVHGKDYGTRNFVVPLRNVHDHSLKVGVSIGDIGKKMGRDGVDNGWIQFTNVRIPRQNMLMRYAKVSDTGVVTKPALDQLTYGALIRGRVSMIADSFHVSKRFLTIALRYACVRRQFGTSGDTKETKIIDYPYHQRRLLPLLAYCYAMKMGADEAQKTWIETTDRILALNPNDPAQKNDLEKAVTDTKELFAASAGMKAFTTWGCAKIIDECRQACGGHGYSGYNGFGQGYADWVVQCTWEGDNNVLCLSMGRGLVQSALQILAGKHVGASIQYVGDKSKISQNGQGTPREQLLSPEFLVEAFRTASRNNILRTTDKYQELVKTLNPDQAFEELSQQRFQCARIHTRQHLISSFYARIATAKDDIKPHLLKLANLFALWSIEEDTGIFLRENILTPGDIDLINSLVDELCVAVRDQVIGLTDAFGLSDFFINAPIGSYDGNVYEKYFAKVNQQNPATNPRPPYYESTLKPFLFREEEDDEICDLDE.

2 residues coordinate FAD: threonine 149 and glycine 188. Catalysis depends on glutamate 444, which acts as the Proton acceptor.

This sequence belongs to the acyl-CoA oxidase family. Heteropentamer composed of five different subunits. Requires FAD as cofactor.

It is found in the peroxisome. It carries out the reaction a 2,3-saturated acyl-CoA + O2 = a (2E)-enoyl-CoA + H2O2. Its pathway is lipid metabolism; peroxisomal fatty acid beta-oxidation. The chain is Acyl-coenzyme A oxidase 1 (POX1) from Yarrowia lipolytica (strain CLIB 122 / E 150) (Yeast).